The primary structure comprises 121 residues: Large ribosomal subunit protein eL18 (121 aa).

Belongs to the eukaryotic ribosomal protein eL18 family.

This chain is Large ribosomal subunit protein eL18, found in Methanospirillum hungatei JF-1 (strain ATCC 27890 / DSM 864 / NBRC 100397 / JF-1).